The primary structure comprises 229 residues: Lactate utilization protein C (229 aa).

Belongs to the LutC/YkgG family.

Functionally, is involved in L-lactate degradation and allows cells to grow with lactate as the sole carbon source. This is Lactate utilization protein C from Shouchella clausii (strain KSM-K16) (Alkalihalobacillus clausii).